The chain runs to 277 residues: Phosphate import ATP-binding protein PstB 2 (277 aa).

The 242-residue stretch at 31–272 (IEVPGLSLFY…PAKKQTEDYI (242 aa)) folds into the ABC transporter domain. 63–70 (GPSGCGKS) provides a ligand contact to ATP.

The protein belongs to the ABC transporter superfamily. Phosphate importer (TC 3.A.1.7) family. As to quaternary structure, the complex is composed of two ATP-binding proteins (PstB), two transmembrane proteins (PstC and PstA) and a solute-binding protein (PstS).

It is found in the cell inner membrane. It carries out the reaction phosphate(out) + ATP + H2O = ADP + 2 phosphate(in) + H(+). Part of the ABC transporter complex PstSACB involved in phosphate import. Responsible for energy coupling to the transport system. This chain is Phosphate import ATP-binding protein PstB 2, found in Pseudomonas putida (strain ATCC 47054 / DSM 6125 / CFBP 8728 / NCIMB 11950 / KT2440).